Reading from the N-terminus, the 523-residue chain is NAD(P)H-quinone oxidoreductase subunit 2 (523 aa).

The next 13 helical transmembrane spans lie at 30-50, 57-77, 94-114, 128-148, 182-202, 223-243, 255-275, 291-311, 317-337, 345-365, 389-409, 424-444, and 477-497; these read VGPE…DLAG, WVPP…ALQW, LAIA…LISW, AAIL…TDLV, LLVG…LYGL, AALA…AVPF, PTPV…ALAL, LLFT…ALAQ, MLAY…VCGT, VLYM…IILF, LGLS…GFFG, VLVV…IGVI, and VALV…NPLF.

It belongs to the complex I subunit 2 family. In terms of assembly, NDH-1 can be composed of about 15 different subunits; different subcomplexes with different compositions have been identified which probably have different functions.

The protein localises to the cellular thylakoid membrane. The catalysed reaction is a plastoquinone + NADH + (n+1) H(+)(in) = a plastoquinol + NAD(+) + n H(+)(out). It catalyses the reaction a plastoquinone + NADPH + (n+1) H(+)(in) = a plastoquinol + NADP(+) + n H(+)(out). In terms of biological role, NDH-1 shuttles electrons from an unknown electron donor, via FMN and iron-sulfur (Fe-S) centers, to quinones in the respiratory and/or the photosynthetic chain. The immediate electron acceptor for the enzyme in this species is believed to be plastoquinone. Couples the redox reaction to proton translocation, and thus conserves the redox energy in a proton gradient. Cyanobacterial NDH-1 also plays a role in inorganic carbon-concentration. The polypeptide is NAD(P)H-quinone oxidoreductase subunit 2 (Synechococcus sp. (strain CC9311)).